A 194-amino-acid chain; its full sequence is MSEFRTFVLCGLGNPGLRYAQTRHNLGFMLIDYVRYTFSFPEFLPKFSGLLSSGRVSSFLLYLFKPVAFMNNSGRPLVQLVNFYKVELENVIVFHDDIDLDFAKVKIKRGGGSGGHNGLKSLDFNLGRDYWRFRFGVGRGVGDPAEHVLSRFTALELERLNKLFGFIGTNLPLLLSDIATRKEKFLNEYKCCSQ.

Tyr-19 contributes to the tRNA binding site. Residue His-24 is the Proton acceptor of the active site. Residues Phe-69, Asn-71, and Asn-117 each contribute to the tRNA site.

It belongs to the PTH family. As to quaternary structure, monomer.

It is found in the cytoplasm. The catalysed reaction is an N-acyl-L-alpha-aminoacyl-tRNA + H2O = an N-acyl-L-amino acid + a tRNA + H(+). Functionally, hydrolyzes ribosome-free peptidyl-tRNAs (with 1 or more amino acids incorporated), which drop off the ribosome during protein synthesis, or as a result of ribosome stalling. Catalyzes the release of premature peptidyl moieties from peptidyl-tRNA molecules trapped in stalled 50S ribosomal subunits, and thus maintains levels of free tRNAs and 50S ribosomes. This is Peptidyl-tRNA hydrolase from Neorickettsia sennetsu (strain ATCC VR-367 / Miyayama) (Ehrlichia sennetsu).